The chain runs to 266 residues: Apolipoprotein A-I (266 aa).

A signal peptide spans 1–18; sequence MKAVVLTLAVLFLTGSQA. 2 consecutive repeat copies span residues 67 to 88 and 89 to 110. The interval 67-266 is 10 X approximate tandem repeats; sequence LKLLDNWDSL…DEAAKKLNAQ (200 aa). A Methionine sulfoxide modification is found at methionine 109. One copy of the 3; half-length repeat lies at 111 to 121; it reads KDLEEVKQKVQ. 5 repeat units span residues 122 to 142, 144 to 165, 166 to 187, 188 to 210, and 211 to 231. Residues 232-242 form a 9; half-length repeat; sequence PALEDLRQGLL. Residues 243-266 form repeat 10; sequence PVLESFKVSLLAAVDEAAKKLNAQ.

This sequence belongs to the apolipoprotein A1/A4/E family. In terms of assembly, homodimer. Interacts with APOA1BP and CLU. Component of a sperm activating protein complex (SPAP), consisting of APOA1, an immunoglobulin heavy chain, an immunoglobulin light chain and albumin. Interacts with NDRG1. Interacts with SCGB3A2. Interacts with NAXE and YJEFN3. In terms of processing, glycosylated. Palmitoylated. Post-translationally, phosphorylation sites are present in the extracellular medium. In terms of tissue distribution, major protein of plasma HDL, also found in chylomicrons.

Its subcellular location is the secreted. Its function is as follows. Participates in the reverse transport of cholesterol from tissues to the liver for excretion by promoting cholesterol efflux from tissues and by acting as a cofactor for the lecithin cholesterol acyltransferase (LCAT). As part of the SPAP complex, activates spermatozoa motility. The polypeptide is Apolipoprotein A-I (APOA1) (Ailuropoda melanoleuca (Giant panda)).